The primary structure comprises 101 residues: Protein RnfH (101 aa).

Belongs to the UPF0125 (RnfH) family.

The chain is Protein RnfH from Coxiella burnetii (strain CbuK_Q154) (Coxiella burnetii (strain Q154)).